A 457-amino-acid chain; its full sequence is RNA-binding suppressor of PAS kinase protein 1 (457 aa).

The region spanning 26–88 is the R3H domain; it reads RIFIIELENS…SCVILFKGEN (63 aa). Disordered stretches follow at residues 142–181, 195–291, and 406–457; these read IDGN…IEKE, LNKS…NGGY, and FQGK…KLNI. Over residues 145–158 the composition is skewed to polar residues; sequence NTRTPNSNLTANSN. Basic and acidic residues predominate over residues 159-181; the sequence is KDQKIEIDDKSSTDLEQERIEKE. Residue Ser-198 is modified to Phosphoserine. The span at 226–247 shows a compositional bias: low complexity; that stretch reads SNTQTSNGSVSSSSPFNSSVTT. Polar residues predominate over residues 248–258; that stretch reads IQVNKPQQQFY. Residues 418–435 are compositionally biased toward basic and acidic residues; it reads KRSDDSNSNKNEGIRRAS. Residues Ser-435, Ser-439, and Ser-447 each carry the phosphoserine modification. Residues 443-457 are compositionally biased toward basic and acidic residues; that stretch reads RDTDSVEMKFDKLNI.

The protein resides in the cytoplasm. The polypeptide is RNA-binding suppressor of PAS kinase protein 1 (RBS1) (Saccharomyces cerevisiae (strain ATCC 204508 / S288c) (Baker's yeast)).